Consider the following 162-residue polypeptide: Protein A49 (162 aa).

This sequence belongs to the poxviridae A49 protein family.

In Homo sapiens (Human), this protein is Protein A49.